A 114-amino-acid polypeptide reads, in one-letter code: Large ribosomal subunit protein bL17 (114 aa).

The protein belongs to the bacterial ribosomal protein bL17 family. In terms of assembly, part of the 50S ribosomal subunit. Contacts protein L32.

This Clostridium acetobutylicum (strain ATCC 824 / DSM 792 / JCM 1419 / IAM 19013 / LMG 5710 / NBRC 13948 / NRRL B-527 / VKM B-1787 / 2291 / W) protein is Large ribosomal subunit protein bL17.